Here is a 147-residue protein sequence, read N- to C-terminus: Protein phosphatase 1 regulatory subunit 14B (147 aa).

The disordered stretch occupies residues 1–55 (MADSGTAGGAALAAPAPGPGSGGPGPRVYFQSPPGAAGEGPGGADDEGPVRRQGK). An N-acetylalanine modification is found at Ala-2. Ser-21 carries the post-translational modification Phosphoserine. Tyr-29 carries the phosphotyrosine modification. Ser-32 bears the Phosphoserine mark. Position 57 is a phosphothreonine (Thr-57). A coiled-coil region spans residues 61–103 (DRKELRKRLNLEEWILEQLTRLYDCQEEEIPELEIDVDELLDM).

Belongs to the PP1 inhibitor family. Phosphorylated primarily on Thr-57 by PKC (in vitro). An unknown Ser is also phosphorylated by PKC (in vitro). Ubiquitous. Expressed at low levels.

It localises to the cytoplasm. Inhibitor of PPP1CA. Has over 50-fold higher inhibitory activity when phosphorylated. This is Protein phosphatase 1 regulatory subunit 14B (PPP1R14B) from Homo sapiens (Human).